A 238-amino-acid chain; its full sequence is Large ribosomal subunit protein uL1 (238 aa).

The protein belongs to the universal ribosomal protein uL1 family. As to quaternary structure, part of the 50S ribosomal subunit.

Binds directly to 23S rRNA. The L1 stalk is quite mobile in the ribosome, and is involved in E site tRNA release. Its function is as follows. Protein L1 is also a translational repressor protein, it controls the translation of the L11 operon by binding to its mRNA. This is Large ribosomal subunit protein uL1 from Trichodesmium erythraeum (strain IMS101).